The sequence spans 557 residues: MRSDIIKDGYTRTPHRSLLRATGLKDDDFKKPFIGVANSFIEIIPGHFFLNKYSEILKDEIRKNGCVPFEFNTIGVDDGIAMGHEGMLYSLPSREIIANSVETVMNAHALDALVCIPNCDKIVPGMLMGALRVNVPTIFVSGGPMAAGVGAKGEALDLNSAFEAVGAYETKQIDEKELKFIECNACPSGGSCSGMFTANSMNTLCEAMGVALEGNGTVLALTSEREELIRKAARRICEIALDERYQIRNIINEKTIKNAMVVDMAMGGSSNTILHMLAISREAGYPLDIASLNDISRSVPHITKIAPSLPSVHMQDVAKAGGLSAVINEIAKFNSDLLSLDALTVSGESLGDRVKNAEILDESVIHTVQNAYSKVGGLAILFGNLAEQGCVIKAAGIIGSRQFSGKAVCFNSQDEAIKGISKGKVQKGDVVVLRYEGPKGGPGMQEMLSPTSLIVGRGLGADVALITDGRFSGATRGLSIGHVSPEAAEGGMIGLLKDGDIIDIDVDKFSINVRLSDTEIEARRKEWKYAGKPVNSRWLRQYQKLVTNASNGAILEA.

Mg(2+) is bound at residue D78. C119 lines the [2Fe-2S] cluster pocket. Residues D120 and K121 each contribute to the Mg(2+) site. Residue K121 is modified to N6-carboxylysine. C192 contributes to the [2Fe-2S] cluster binding site. E446 serves as a coordination point for Mg(2+). Residue S472 is the Proton acceptor of the active site.

The protein belongs to the IlvD/Edd family. In terms of assembly, homodimer. [2Fe-2S] cluster serves as cofactor. Mg(2+) is required as a cofactor.

The catalysed reaction is (2R)-2,3-dihydroxy-3-methylbutanoate = 3-methyl-2-oxobutanoate + H2O. It catalyses the reaction (2R,3R)-2,3-dihydroxy-3-methylpentanoate = (S)-3-methyl-2-oxopentanoate + H2O. It functions in the pathway amino-acid biosynthesis; L-isoleucine biosynthesis; L-isoleucine from 2-oxobutanoate: step 3/4. It participates in amino-acid biosynthesis; L-valine biosynthesis; L-valine from pyruvate: step 3/4. Its function is as follows. Functions in the biosynthesis of branched-chain amino acids. Catalyzes the dehydration of (2R,3R)-2,3-dihydroxy-3-methylpentanoate (2,3-dihydroxy-3-methylvalerate) into 2-oxo-3-methylpentanoate (2-oxo-3-methylvalerate) and of (2R)-2,3-dihydroxy-3-methylbutanoate (2,3-dihydroxyisovalerate) into 2-oxo-3-methylbutanoate (2-oxoisovalerate), the penultimate precursor to L-isoleucine and L-valine, respectively. This Campylobacter fetus subsp. fetus (strain 82-40) protein is Dihydroxy-acid dehydratase.